Consider the following 812-residue polypeptide: Probable inorganic carbon transporter subunit DabA (812 aa).

C337, D339, H499, and C514 together coordinate Zn(2+).

Belongs to the inorganic carbon transporter (TC 9.A.2) DabA family. In terms of assembly, forms a complex with DabB. Zn(2+) is required as a cofactor.

The protein localises to the cell inner membrane. Part of an energy-coupled inorganic carbon pump. The polypeptide is Probable inorganic carbon transporter subunit DabA (Xanthomonas oryzae pv. oryzae (strain MAFF 311018)).